The chain runs to 165 residues: Urease accessory protein UreE (165 aa).

This sequence belongs to the UreE family.

The protein resides in the cytoplasm. Its function is as follows. Involved in urease metallocenter assembly. Binds nickel. Probably functions as a nickel donor during metallocenter assembly. In Micrococcus luteus (strain ATCC 4698 / DSM 20030 / JCM 1464 / CCM 169 / CCUG 5858 / IAM 1056 / NBRC 3333 / NCIMB 9278 / NCTC 2665 / VKM Ac-2230) (Micrococcus lysodeikticus), this protein is Urease accessory protein UreE.